The sequence spans 2238 residues: RNA-directed RNA polymerase L (2238 aa).

An endonuclease region spans residues 26-284; sequence ITLVTCQNDA…THHSEHPVDC (259 aa). Residues glutamate 51, aspartate 89, and glutamate 102 each coordinate Mn(2+). Lysine 115 is a catalytic residue. Positions 1188–1387 constitute a RdRp catalytic domain; that stretch reads TDMKMCVNLG…FISTKFNKFV (200 aa). Aspartate 1346 is a Mg(2+) binding site.

Belongs to the Bunyavirales RNA polymerase family. Homomultimer; the oligomeric structure is essential for the polymerase activity. Interacts with nucleoprotein N. Interacts with protein Z; this interaction inhibits viral transcription and replication, Z partially blocks the product exit tunnel for the releasing nascent RNA product. Mn(2+) is required as a cofactor. It depends on Mg(2+) as a cofactor.

Its subcellular location is the virion. The protein localises to the host cytoplasm. The catalysed reaction is RNA(n) + a ribonucleoside 5'-triphosphate = RNA(n+1) + diphosphate. Functionally, RNA-dependent RNA polymerase, which is responsible for the replication and transcription of the viral RNA genome using antigenomic RNA as an intermediate. During transcription, synthesizes subgenomic RNAs and assures their capping by a cap-snatching mechanism, which involves the endonuclease activity cleaving the host capped pre-mRNAs. These short capped RNAs are then used as primers for viral transcription. The 3'-end of subgenomic mRNAs molecules are heterogeneous and not polyadenylated. The replicase function is to direct synthesis of antigenomic and genomic RNA which are encapsidated and non capped. As a consequence of the use of the same enzyme for both transcription and replication, these mechanisms need to be well coordinated. These processes may be regulated by proteins N and Z in a dose-dependent manner. Z protein inhibits the viral polymerase L und thus the viral transcription and RNA synthesis. This is RNA-directed RNA polymerase L from Calomys callosus (Large vesper mouse).